A 199-amino-acid polypeptide reads, in one-letter code: dITP/XTP pyrophosphatase (199 aa).

Position 7-12 (7-12 (TGNAGK)) interacts with substrate. Residues glutamate 37 and aspartate 66 each contribute to the Mg(2+) site. Aspartate 66 functions as the Proton acceptor in the catalytic mechanism. Residues serine 67, 146 to 149 (FGYD), lysine 169, and 174 to 175 (HR) contribute to the substrate site.

It belongs to the HAM1 NTPase family. In terms of assembly, homodimer. It depends on Mg(2+) as a cofactor.

It carries out the reaction XTP + H2O = XMP + diphosphate + H(+). The catalysed reaction is dITP + H2O = dIMP + diphosphate + H(+). The enzyme catalyses ITP + H2O = IMP + diphosphate + H(+). Its function is as follows. Pyrophosphatase that catalyzes the hydrolysis of nucleoside triphosphates to their monophosphate derivatives, with a high preference for the non-canonical purine nucleotides XTP (xanthosine triphosphate), dITP (deoxyinosine triphosphate) and ITP. Seems to function as a house-cleaning enzyme that removes non-canonical purine nucleotides from the nucleotide pool, thus preventing their incorporation into DNA/RNA and avoiding chromosomal lesions. This Deinococcus geothermalis (strain DSM 11300 / CIP 105573 / AG-3a) protein is dITP/XTP pyrophosphatase.